The sequence spans 269 residues: Formamidopyrimidine-DNA glycosylase (269 aa).

P2 (schiff-base intermediate with DNA) is an active-site residue. E3 (proton donor) is an active-site residue. K57 functions as the Proton donor; for beta-elimination activity in the catalytic mechanism. Residues H90, R109, and K150 each contribute to the DNA site. The FPG-type zinc-finger motif lies at 235–269; the sequence is QVYGRKGEPCRVCGTPIVATKHAQRATFYCRQCQK. The active-site Proton donor; for delta-elimination activity is R259.

The protein belongs to the FPG family. In terms of assembly, monomer. It depends on Zn(2+) as a cofactor.

It carries out the reaction Hydrolysis of DNA containing ring-opened 7-methylguanine residues, releasing 2,6-diamino-4-hydroxy-5-(N-methyl)formamidopyrimidine.. It catalyses the reaction 2'-deoxyribonucleotide-(2'-deoxyribose 5'-phosphate)-2'-deoxyribonucleotide-DNA = a 3'-end 2'-deoxyribonucleotide-(2,3-dehydro-2,3-deoxyribose 5'-phosphate)-DNA + a 5'-end 5'-phospho-2'-deoxyribonucleoside-DNA + H(+). Its function is as follows. Involved in base excision repair of DNA damaged by oxidation or by mutagenic agents. Acts as a DNA glycosylase that recognizes and removes damaged bases. Has a preference for oxidized purines, such as 7,8-dihydro-8-oxoguanine (8-oxoG). Has AP (apurinic/apyrimidinic) lyase activity and introduces nicks in the DNA strand. Cleaves the DNA backbone by beta-delta elimination to generate a single-strand break at the site of the removed base with both 3'- and 5'-phosphates. This Shigella dysenteriae serotype 1 (strain Sd197) protein is Formamidopyrimidine-DNA glycosylase.